Consider the following 191-residue polypeptide: Imidazoleglycerol-phosphate dehydratase (191 aa).

It belongs to the imidazoleglycerol-phosphate dehydratase family.

The protein resides in the cytoplasm. The enzyme catalyses D-erythro-1-(imidazol-4-yl)glycerol 3-phosphate = 3-(imidazol-4-yl)-2-oxopropyl phosphate + H2O. The protein operates within amino-acid biosynthesis; L-histidine biosynthesis; L-histidine from 5-phospho-alpha-D-ribose 1-diphosphate: step 6/9. This Thermodesulfovibrio yellowstonii (strain ATCC 51303 / DSM 11347 / YP87) protein is Imidazoleglycerol-phosphate dehydratase.